Here is a 122-residue protein sequence, read N- to C-terminus: Flagellar protein FliT (122 aa).

The required for homodimerization stretch occupies residues 1–50 (MERQQQLLAAYQQIHSLSSQMIALAQTERWEDLVELELAYVTAVESTAAF). Positions 60–98 (LQELLRNKLQQILDNETELKRLLQQRMDQLKELIGQSTR) are fliD binding.

It belongs to the FliT family. In terms of assembly, homodimer. Interacts with FliD and FlhC.

Its subcellular location is the cytoplasm. The protein resides in the cytosol. Its function is as follows. Dual-function protein that regulates the transcription of class 2 flagellar operons and that also acts as an export chaperone for the filament-capping protein FliD. As a transcriptional regulator, acts as an anti-FlhDC factor; it directly binds FlhC, thus inhibiting the binding of the FlhC/FlhD complex to class 2 promoters, resulting in decreased expression of class 2 flagellar operons. As a chaperone, effects FliD transition to the membrane by preventing its premature polymerization, and by directing it to the export apparatus. This chain is Flagellar protein FliT, found in Serratia proteamaculans (strain 568).